The following is a 79-amino-acid chain: Small ribosomal subunit protein bS16 (79 aa).

Belongs to the bacterial ribosomal protein bS16 family.

The polypeptide is Small ribosomal subunit protein bS16 (Buchnera aphidicola subsp. Acyrthosiphon pisum (strain 5A)).